The sequence spans 448 residues: Trigger factor (448 aa).

A PPIase FKBP-type domain is found at Gly-172–Pro-257.

It belongs to the FKBP-type PPIase family. Tig subfamily.

Its subcellular location is the cytoplasm. The catalysed reaction is [protein]-peptidylproline (omega=180) = [protein]-peptidylproline (omega=0). Functionally, involved in protein export. Acts as a chaperone by maintaining the newly synthesized protein in an open conformation. Functions as a peptidyl-prolyl cis-trans isomerase. This is Trigger factor from Burkholderia lata (strain ATCC 17760 / DSM 23089 / LMG 22485 / NCIMB 9086 / R18194 / 383).